The following is a 503-amino-acid chain: Glucose-6-phosphate 1-dehydrogenase (503 aa).

Residues 14–21, Arg49, and Lys158 contribute to the NADP(+) site; that span reads GASGDLSK. D-glucose 6-phosphate contacts are provided by residues Lys158, 188 to 192, Glu226, and Asp245; that span reads HYLGK. The Proton acceptor role is filled by His250. Lys341 lines the NADP(+) pocket. A D-glucose 6-phosphate-binding site is contributed by Lys344. NADP(+) contacts are provided by Lys350, Arg354, and Arg376. Gln378 contributes to the D-glucose 6-phosphate binding site. Residues 384-386, Arg471, and Tyr487 each bind NADP(+); that span reads YLK.

This sequence belongs to the glucose-6-phosphate dehydrogenase family.

The enzyme catalyses D-glucose 6-phosphate + NADP(+) = 6-phospho-D-glucono-1,5-lactone + NADPH + H(+). The protein operates within carbohydrate degradation; pentose phosphate pathway; D-ribulose 5-phosphate from D-glucose 6-phosphate (oxidative stage): step 1/3. Its function is as follows. Catalyzes the rate-limiting step of the oxidative pentose-phosphate pathway, which represents a route for the dissimilation of carbohydrates besides glycolysis. The main function of this enzyme is to provide reducing power (NADPH) and pentose phosphates for fatty acid and nucleic acid synthesis. The G6PDH activity is required to cope with hydrogen peroxide and potassium bisulfite stresses and plays a role in adaptation to conditions used in wine fermentations. The protein is Glucose-6-phosphate 1-dehydrogenase of Hanseniaspora uvarum (Yeast).